The following is a 296-amino-acid chain: Ribosomal RNA small subunit methyltransferase A (296 aa).

S-adenosyl-L-methionine contacts are provided by asparagine 31, leucine 33, glycine 58, glutamate 79, aspartate 111, and asparagine 136.

This sequence belongs to the class I-like SAM-binding methyltransferase superfamily. rRNA adenine N(6)-methyltransferase family. RsmA subfamily.

It localises to the cytoplasm. It carries out the reaction adenosine(1518)/adenosine(1519) in 16S rRNA + 4 S-adenosyl-L-methionine = N(6)-dimethyladenosine(1518)/N(6)-dimethyladenosine(1519) in 16S rRNA + 4 S-adenosyl-L-homocysteine + 4 H(+). Specifically dimethylates two adjacent adenosines (A1518 and A1519) in the loop of a conserved hairpin near the 3'-end of 16S rRNA in the 30S particle. May play a critical role in biogenesis of 30S subunits. This is Ribosomal RNA small subunit methyltransferase A from Lactobacillus delbrueckii subsp. bulgaricus (strain ATCC BAA-365 / Lb-18).